The following is a 678-amino-acid chain: Pentatricopeptide repeat-containing protein At5g39980, chloroplastic (678 aa).

Residues 1–64 (MYIEIASSSS…NKKVWRKQPE (64 aa)) constitute a chloroplast transit peptide. 14 PPR repeats span residues 154–188 (SVFA…ALAP), 189–223 (DRYT…RVSG), 224–258 (DLVL…GITP), 259–293 (DLVA…GVLP), 294–328 (NTVS…NCAL), 329–363 (DLTT…DIEP), 364–398 (NVVS…DIEQ), 399–433 (NVVT…GIEP), 434–468 (NAIT…GVEI), 469–503 (DQVL…DNIP), 535–569 (DISV…GYFP), 570–604 (DSNV…GCVF), 605–638 (PDEV…DPNV), and 639–674 (NSKE…GILK).

Belongs to the PPR family. P subfamily.

The protein localises to the plastid. It localises to the chloroplast. The protein is Pentatricopeptide repeat-containing protein At5g39980, chloroplastic of Arabidopsis thaliana (Mouse-ear cress).